The sequence spans 157 residues: Endoribonuclease YbeY (157 aa).

Histidine 116, histidine 120, and histidine 126 together coordinate Zn(2+).

This sequence belongs to the endoribonuclease YbeY family. It depends on Zn(2+) as a cofactor.

Its subcellular location is the cytoplasm. Functionally, single strand-specific metallo-endoribonuclease involved in late-stage 70S ribosome quality control and in maturation of the 3' terminus of the 16S rRNA. The sequence is that of Endoribonuclease YbeY from Paenarthrobacter aurescens (strain TC1).